A 464-amino-acid chain; its full sequence is Glycine receptor subunit alpha-3 (464 aa).

The first 33 residues, 1–33 (MAHVRHFRTLLSGFYFWEAALLLSLVATKETNS), serve as a signal peptide directing secretion. Over 34–255 (ARSRSAPMSP…RFHLERQMGY (222 aa)) the chain is Extracellular. N-linked (GlcNAc...) asparagine glycosylation is present at Asn-71. Cys-171 and Cys-185 are joined by a disulfide. The Zn(2+) site is built by Glu-225 and Asp-227. Cys-231 and Cys-242 are oxidised to a cystine. A strychnine-binding site is contributed by 235–240 (YNTGKF). His-248 serves as a coordination point for Zn(2+). Residues 256-277 (YLIQMYIPSLLIVILSWVSFWI) form a helical membrane-spanning segment. Residues 278 to 282 (NMDAA) are Cytoplasmic-facing. A helical transmembrane segment spans residues 283–303 (PARVALGITTVLTMTTQSSGS). The Extracellular portion of the chain corresponds to 304 to 314 (RASLPKVSYVK). Residues 315–335 (AIDIWMAVCLLFVFSALLEYA) traverse the membrane as a helical segment. Topologically, residues 336-430 (AVNFVSRQHK…FIDRAKKIDT (95 aa)) are cytoplasmic. Residue Ser-370 is modified to Phosphoserine. At Ser-379 the chain carries Phosphoserine; by PKA. Residues 431–451 (ISRACFPLAFLIFNIFYWVIY) traverse the membrane as a helical segment. Residues 452 to 464 (KILRHEDIHHQQD) are Extracellular-facing.

The protein belongs to the ligand-gated ion channel (TC 1.A.9) family. Glycine receptor (TC 1.A.9.3) subfamily. GLRA3 sub-subfamily. In terms of assembly, homopentamer (in vitro). Heteropentamer composed of GLRA3 and GLRB. Both homopentamers and heteropentamers form functional ion channels, but their characteristics are subtly different. In terms of processing, phosphorylated by PKA; this causes down-regulation of channel activity.

The protein resides in the postsynaptic cell membrane. Its subcellular location is the perikaryon. It localises to the cell projection. It is found in the dendrite. The protein localises to the synapse. The protein resides in the cell membrane. It catalyses the reaction chloride(in) = chloride(out). Its activity is regulated as follows. Low levels of Zn(2+) ions (1 uM) increase glycine sensitivity and decrease the glycine concentration required for half-maximal channel activity. Channel activity is strongly enhanced by ethanol. Inhibited by picrotoxin. Inhibited by prostaglandin E2, probably via PKA-mediated phosphorylation at Ser-379. In terms of biological role, glycine receptors are ligand-gated chloride channels. Channel opening is triggered by extracellular glycine. Channel characteristics depend on the subunit composition; heteropentameric channels display faster channel closure. Plays an important role in the down-regulation of neuronal excitability. Contributes to the generation of inhibitory postsynaptic currents. Contributes to increased pain perception in response to increased prostaglandin E2 levels. Plays a role in cellular responses to ethanol. This is Glycine receptor subunit alpha-3 (Glra3) from Rattus norvegicus (Rat).